Here is a 36-residue protein sequence, read N- to C-terminus: Dolichyl-diphosphooligosaccharide--protein glycosyltransferase subunit OST4 (36 aa).

At 1–9 (MISDEQLNS) the chain is on the lumenal side. The helical transmembrane segment at 10–28 (LAITFGIVMMTLIVIYHAV) threads the bilayer. At 29–36 (DSTMSPKN) the chain is on the cytoplasmic side.

Belongs to the OST4 family. In terms of assembly, component of the oligosaccharyltransferase (OST) complex, which appears to exist in two assemblies comprising OST1, OST2, OST4, OST5, STT3, SWP1, WPB1, and either OST3 or OST6. OST assembly occurs through the formation of 3 subcomplexes. Subcomplex 1 contains OST1 and OST5, subcomplex 2 contains STT3, OST3, and OST4, and subcomplex 3 contains OST2, WBP1, and SWP1. Interacts with SEC61, SBH1 and SSS1.

It is found in the endoplasmic reticulum membrane. It functions in the pathway protein modification; protein glycosylation. In terms of biological role, subunit of the oligosaccharyl transferase (OST) complex that catalyzes the initial transfer of a defined glycan (Glc(3)Man(9)GlcNAc(2) in eukaryotes) from the lipid carrier dolichol-pyrophosphate to an asparagine residue within an Asn-X-Ser/Thr consensus motif in nascent polypeptide chains, the first step in protein N-glycosylation. N-glycosylation occurs cotranslationally and the complex associates with the Sec61 complex at the channel-forming translocon complex that mediates protein translocation across the endoplasmic reticulum (ER). All subunits are required for a maximal enzyme activity. This is Dolichyl-diphosphooligosaccharide--protein glycosyltransferase subunit OST4 (OST4) from Saccharomyces cerevisiae (strain ATCC 204508 / S288c) (Baker's yeast).